The chain runs to 451 residues: Runt-related transcription factor 1 (451 aa).

Residues 1-37 (MRIPVDASTSRRFTPPSTALSPGKMSEALPLGAPDGG) are disordered. Residues 7 to 20 (ASTSRRFTPPSTAL) are compositionally biased toward polar residues. The residue at position 14 (threonine 14) is a Phosphothreonine. At serine 21 the chain carries Phosphoserine. Lysine 24 and lysine 43 each carry N6-acetyllysine. The 129-residue stretch at 50 to 178 (SMVEVLADHP…TVDGPREPRR (129 aa)) folds into the Runt domain. Residues 80-84 (RCNKT) are interaction with DNA. Residues asparagine 112, glutamate 116, arginine 139, and valine 170 each coordinate chloride. 2 interaction with DNA regions span residues 135 to 143 (RFVGRSGRG) and 168 to 177 (ITVDGPREPR). Disordered regions lie at residues 170–195 (VDGPREPRRHRQKLDDQTKPGSLSFS) and 209–252 (MRVS…SPPW). A phosphoserine mark is found at serine 193 and serine 212. Residues 222–247 (PRASLNHSTAFNPQPQSQMQDARQIQ) are compositionally biased toward polar residues. Serine 249 is subject to Phosphoserine; by HIPK2. Residues serine 266 and serine 268 each carry the phosphoserine modification. The tract at residues 268-290 (SVHPATPISPGRASGMTSLSAEL) is disordered. Phosphothreonine; by HIPK2 is present on threonine 273. The residue at position 276 (serine 276) is a Phosphoserine; by HIPK2. The segment at 291–370 (SSRLSTAPDL…SQAQAGPFQT (80 aa)) is interaction with KAT6A. Threonine 296 carries the post-translational modification Phosphothreonine. An interaction with KAT6B region spans residues 307–399 (RQFPTLPSIS…MVGGERSPPR (93 aa)). Residues 361–401 (SQAQAGPFQTGSPSYHLYYGASAGSYQFSMVGGERSPPRIL) form an interaction with FOXP3 region. The segment at 406–451 (NASTGAALLNPSLPSQSDVVETEGSHSNSPTNMPPARLEEAVWRPY) is disordered. Residues 417 to 436 (SLPSQSDVVETEGSHSNSPT) are compositionally biased toward polar residues. The residue at position 434 (serine 434) is a Phosphoserine. Positions 442–451 (RLEEAVWRPY) are enriched in basic and acidic residues.

As to quaternary structure, heterodimer with CBFB. RUNX1 binds DNA as a monomer and through the Runt domain. DNA-binding is increased by heterodimerization. Interacts with TLE1 and ALYREF/THOC4. Interacts with HIPK2, ELF1, ELF2 and SPI1. Interacts via its Runt domain with the ELF4 N-terminal region. Interaction with ELF2 isoform 2 (NERF-1a) may act to repress RUNX1-mediated transactivation. Interacts with KAT6A and KAT6B. Interacts with SUV39H1, leading to abrogation of transactivating and DNA-binding properties of RUNX1. Interacts with YAP1. Interaction with CDK6 prevents myeloid differentiation, reducing its transcription transactivation activity. Found in a complex with PRMT5, RUNX1 and CBFB. Interacts with FOXP3. Interacts with TBX21. Interacts with DPF2. Phosphorylated in its C-terminus upon IL-6 treatment. Phosphorylation enhances interaction with KAT6A. Post-translationally, methylated. In terms of processing, phosphorylated in Ser-249 Thr-273 and Ser-276 by HIPK2 when associated with CBFB and DNA. This phosphorylation promotes subsequent EP300 phosphorylation. In terms of tissue distribution, isoform 4 is expressed at high levels in thymus, spleen and T-cell lines and at lower levels in myeloid cell lines and nonhematopoietic cells. Isoform 5 is expressed ubiquitously in lumbar vertebrae, brain, kidney, heart, muscle, ovary and osteoblast-like cell line MC3T3-E1.

The protein resides in the nucleus. Its function is as follows. Forms the heterodimeric complex core-binding factor (CBF) with CBFB. RUNX members modulate the transcription of their target genes through recognizing the core consensus binding sequence 5'-TGTGGT-3', or very rarely, 5'-TGCGGT-3', within their regulatory regions via their runt domain, while CBFB is a non-DNA-binding regulatory subunit that allosterically enhances the sequence-specific DNA-binding capacity of RUNX. The heterodimers bind to the core site of a number of enhancers and promoters, including murine leukemia virus, polyomavirus enhancer, T-cell receptor enhancers, LCK, IL3 and GM-CSF promoters. Essential for the development of normal hematopoiesis. Acts synergistically with ELF4 to transactivate the IL-3 promoter and with ELF2 to transactivate the BLK promoter. Inhibits KAT6B-dependent transcriptional activation. Involved in lineage commitment of immature T cell precursors. CBF complexes repress ZBTB7B transcription factor during cytotoxic (CD8+) T cell development. They bind to RUNX-binding sequence within the ZBTB7B locus acting as transcriptional silencer and allowing for cytotoxic T cell differentiation. CBF complexes binding to the transcriptional silencer is essential for recruitment of nuclear protein complexes that catalyze epigenetic modifications to establish epigenetic ZBTB7B silencing. Controls the anergy and suppressive function of regulatory T-cells (Treg) by associating with FOXP3. Activates the expression of IL2 and IFNG and down-regulates the expression of TNFRSF18, IL2RA and CTLA4, in conventional T-cells. Positively regulates the expression of RORC in T-helper 17 cells. Functionally, isoform 4 shows higher binding activities for target genes and binds TCR-beta-E2 and RAG-1 target site with threefold higher affinity than other isoforms. It is less effective in the context of neutrophil terminal differentiation. This Mus musculus (Mouse) protein is Runt-related transcription factor 1 (Runx1).